The chain runs to 306 residues: Aspartate carbamoyltransferase catalytic subunit (306 aa).

Residues Arg-54 and Thr-55 each coordinate carbamoyl phosphate. Residue Lys-83 participates in L-aspartate binding. 3 residues coordinate carbamoyl phosphate: Arg-104, His-132, and Gln-135. L-aspartate is bound by residues Arg-165 and Arg-227. Carbamoyl phosphate-binding residues include Leu-266 and Pro-267.

The protein belongs to the aspartate/ornithine carbamoyltransferase superfamily. ATCase family. Heterododecamer (2C3:3R2) of six catalytic PyrB chains organized as two trimers (C3), and six regulatory PyrI chains organized as three dimers (R2).

The enzyme catalyses carbamoyl phosphate + L-aspartate = N-carbamoyl-L-aspartate + phosphate + H(+). The protein operates within pyrimidine metabolism; UMP biosynthesis via de novo pathway; (S)-dihydroorotate from bicarbonate: step 2/3. Catalyzes the condensation of carbamoyl phosphate and aspartate to form carbamoyl aspartate and inorganic phosphate, the committed step in the de novo pyrimidine nucleotide biosynthesis pathway. The polypeptide is Aspartate carbamoyltransferase catalytic subunit (Clostridium kluyveri (strain NBRC 12016)).